Reading from the N-terminus, the 425-residue chain is MLDQKLIRENPTSVEENLSLRGKVYNISHIHELTVKKKDIDIKISSLQSESKKLSKLIGQEISKSKNNDSPELISLKKKGNEYRIKISELEEKQRILDKEVDDEIYNLPNFPSKNAPIGKDENDNIQVKTWGNPLKDENLKSHWEIGESLNIFDSVKSTKISKSRFVTLIGNGARLERALINFMLDMHTKNGYLELMPPALVNSESLKGSGQLPKFSNESFKCSNDDLWLSPTAEVPLTAFHRNELIDPKQLPIKYVAYSPCFRREAGSYGKDTKGLIRLHQFNKVELYWFCDPTKSLEAHKKITSDAENIFKKLNLPYRIVDICTGDLGFSSSRTFDLEVWLPSSKCYREISSCSNCLDFQARRSSIRSKIDKKNIYLHTLNGSGLAIGRTMAAILENGQQTDGSVKIPDALVPYFGSNFLKNA.

233-235 (TAE) provides a ligand contact to L-serine. 264 to 266 (RRE) lines the ATP pocket. E287 lines the L-serine pocket. Residue 351 to 354 (EISS) participates in ATP binding. Residue S385 participates in L-serine binding.

Belongs to the class-II aminoacyl-tRNA synthetase family. Type-1 seryl-tRNA synthetase subfamily. As to quaternary structure, homodimer. The tRNA molecule binds across the dimer.

The protein localises to the cytoplasm. It carries out the reaction tRNA(Ser) + L-serine + ATP = L-seryl-tRNA(Ser) + AMP + diphosphate + H(+). It catalyses the reaction tRNA(Sec) + L-serine + ATP = L-seryl-tRNA(Sec) + AMP + diphosphate + H(+). The protein operates within aminoacyl-tRNA biosynthesis; selenocysteinyl-tRNA(Sec) biosynthesis; L-seryl-tRNA(Sec) from L-serine and tRNA(Sec): step 1/1. In terms of biological role, catalyzes the attachment of serine to tRNA(Ser). Is also able to aminoacylate tRNA(Sec) with serine, to form the misacylated tRNA L-seryl-tRNA(Sec), which will be further converted into selenocysteinyl-tRNA(Sec). The sequence is that of Serine--tRNA ligase from Prochlorococcus marinus (strain MIT 9215).